Reading from the N-terminus, the 211-residue chain is Large ribosomal subunit protein uL4 (211 aa).

Residues 41 to 53 (QAHSRQGTASTLT) show a composition bias toward polar residues. The tract at residues 41 to 85 (QAHSRQGTASTLTRAEVRGGGRKPYKQKGTGRARQGSIRTPLRPG) is disordered. Residues 60-71 (GGRKPYKQKGTG) show a composition bias toward basic residues.

The protein belongs to the universal ribosomal protein uL4 family. In terms of assembly, part of the 50S ribosomal subunit.

In terms of biological role, one of the primary rRNA binding proteins, this protein initially binds near the 5'-end of the 23S rRNA. It is important during the early stages of 50S assembly. It makes multiple contacts with different domains of the 23S rRNA in the assembled 50S subunit and ribosome. Forms part of the polypeptide exit tunnel. The polypeptide is Large ribosomal subunit protein uL4 (Prochlorococcus marinus (strain SARG / CCMP1375 / SS120)).